A 102-amino-acid chain; its full sequence is NADH-quinone oxidoreductase subunit K (102 aa).

The next 3 helical transmembrane spans lie at 6–26 (LEHG…GLMV), 30–50 (ILFV…AFVV), and 62–82 (VMFI…LAIL).

The protein belongs to the complex I subunit 4L family. In terms of assembly, NDH-1 is composed of 13 different subunits. Subunits NuoA, H, J, K, L, M, N constitute the membrane sector of the complex.

It is found in the cell inner membrane. The enzyme catalyses a quinone + NADH + 5 H(+)(in) = a quinol + NAD(+) + 4 H(+)(out). Its function is as follows. NDH-1 shuttles electrons from NADH, via FMN and iron-sulfur (Fe-S) centers, to quinones in the respiratory chain. The immediate electron acceptor for the enzyme in this species is believed to be ubiquinone. Couples the redox reaction to proton translocation (for every two electrons transferred, four hydrogen ions are translocated across the cytoplasmic membrane), and thus conserves the redox energy in a proton gradient. The chain is NADH-quinone oxidoreductase subunit K from Pseudomonas syringae pv. tomato (strain ATCC BAA-871 / DC3000).